The following is a 109-amino-acid chain: Archaeosine synthase (109 aa).

The Thioimide intermediate role is filled by C21. The Proton donor/acceptor role is filled by D28. Substrate contacts are provided by residues D28, 43–46 (LAIE), and 62–63 (HE).

Belongs to the archaeosine synthase type 2 family. As to quaternary structure, forms a symmetric tunnel-fold (T-fold) homodecamer of two head-to-head facing pentameric subunits, with 10 active sites at the intermonomer interfaces.

It catalyses the reaction 7-cyano-7-carbaguanosine(15) in tRNA + NH4(+) = archaeosine(15) in tRNA. The protein operates within tRNA modification; archaeosine-tRNA biosynthesis. Its function is as follows. Is responsible for the final step in the biosynthesis of archaeosine, a modified nucleoside present in the dihydrouridine loop (D-loop) of archaeal tRNA. Catalyzes the conversion of 7-cyano-7-deazaguanine (preQ0)-modified tRNA to archaeosine-tRNA, transforming a nitrile group to a formamidine group. Can use neither glutamine nor asparagine as amino donor in vitro, is only able to utilize free ammonium. However, the enzyme might function in vivo with a partner that serves to generate ammonium. The chain is Archaeosine synthase from Pyrobaculum calidifontis (strain DSM 21063 / JCM 11548 / VA1).